The sequence spans 292 residues: Large ribosomal subunit protein bL19m (292 aa).

The segment at 39 to 68 is disordered; that stretch reads GPGRRQITGPSEPGVFQPPPKPVIVDKRGP. The residue at position 77 (Ser-77) is a Phosphoserine.

This sequence belongs to the bacterial ribosomal protein bL19 family. In terms of assembly, component of the mitochondrial ribosome large subunit (39S) which comprises a 16S rRNA and about 50 distinct proteins.

It is found in the mitochondrion. The polypeptide is Large ribosomal subunit protein bL19m (MRPL19) (Bos taurus (Bovine)).